The following is a 179-amino-acid chain: MKQFLDFLPLVVFFAFYKIYDIYAATAALIVATAIVLIYSWVRFRKVEKMALITFVLVVVFGGLTLFFHNDEFIKWKVTVIYALFAGALLVSQWVMKKPLIQRMLGKELTLPQSVWSKLNLAWAVFFILCGLANIYIAFWLPQNIWVNFKVFGLTALTLIFTLLSGIYIYRHMPQEDKS.

5 helical membrane-spanning segments follow: residues 22–42 (IYAATAALIVATAIVLIYSWV), 50–70 (MALITFVLVVVFGGLTLFFHN), 76–96 (WKVTVIYALFAGALLVSQWVM), 121–141 (LAWAVFFILCGLANIYIAFWL), and 149–169 (FKVFGLTALTLIFTLLSGIYI).

It belongs to the YciB family.

It localises to the cell inner membrane. Its function is as follows. Plays a role in cell envelope biogenesis, maintenance of cell envelope integrity and membrane homeostasis. In Escherichia coli O127:H6 (strain E2348/69 / EPEC), this protein is Inner membrane-spanning protein YciB.